A 195-amino-acid polypeptide reads, in one-letter code: ATP-dependent Clp protease proteolytic subunit (195 aa).

Serine 97 (nucleophile) is an active-site residue. The active site involves histidine 122.

This sequence belongs to the peptidase S14 family. In terms of assembly, fourteen ClpP subunits assemble into 2 heptameric rings which stack back to back to give a disk-like structure with a central cavity, resembling the structure of eukaryotic proteasomes.

The protein localises to the cytoplasm. It catalyses the reaction Hydrolysis of proteins to small peptides in the presence of ATP and magnesium. alpha-casein is the usual test substrate. In the absence of ATP, only oligopeptides shorter than five residues are hydrolyzed (such as succinyl-Leu-Tyr-|-NHMec, and Leu-Tyr-Leu-|-Tyr-Trp, in which cleavage of the -Tyr-|-Leu- and -Tyr-|-Trp bonds also occurs).. Cleaves peptides in various proteins in a process that requires ATP hydrolysis. Has a chymotrypsin-like activity. Plays a major role in the degradation of misfolded proteins. The polypeptide is ATP-dependent Clp protease proteolytic subunit (Lactobacillus acidophilus (strain ATCC 700396 / NCK56 / N2 / NCFM)).